A 240-amino-acid polypeptide reads, in one-letter code: Large ribosomal subunit protein uL2 (240 aa).

Positions 199–240 (DHPFGGGGRQHPGRPKSVSRDAAPGRKVGDIASKRTGRGGNE) are disordered. Residues 221 to 231 (APGRKVGDIAS) are compositionally biased toward basic and acidic residues.

The protein belongs to the universal ribosomal protein uL2 family. In terms of assembly, part of the 50S ribosomal subunit. Forms a bridge to the 30S subunit in the 70S ribosome.

Its function is as follows. One of the primary rRNA binding proteins. Required for association of the 30S and 50S subunits to form the 70S ribosome, for tRNA binding and peptide bond formation. It has been suggested to have peptidyltransferase activity; this is somewhat controversial. Makes several contacts with the 16S rRNA in the 70S ribosome. This chain is Large ribosomal subunit protein uL2, found in Halobacterium salinarum (strain ATCC 29341 / DSM 671 / R1).